Reading from the N-terminus, the 132-residue chain is Ribosome-binding factor A (132 aa).

This sequence belongs to the RbfA family. In terms of assembly, monomer. Binds 30S ribosomal subunits, but not 50S ribosomal subunits or 70S ribosomes.

It is found in the cytoplasm. In terms of biological role, one of several proteins that assist in the late maturation steps of the functional core of the 30S ribosomal subunit. Associates with free 30S ribosomal subunits (but not with 30S subunits that are part of 70S ribosomes or polysomes). Required for efficient processing of 16S rRNA. May interact with the 5'-terminal helix region of 16S rRNA. This Pectobacterium atrosepticum (strain SCRI 1043 / ATCC BAA-672) (Erwinia carotovora subsp. atroseptica) protein is Ribosome-binding factor A.